The chain runs to 101 residues: Small ribosomal subunit protein uS14 (101 aa).

Belongs to the universal ribosomal protein uS14 family. In terms of assembly, part of the 30S ribosomal subunit. Contacts proteins S3 and S10.

Its function is as follows. Binds 16S rRNA, required for the assembly of 30S particles and may also be responsible for determining the conformation of the 16S rRNA at the A site. This Novosphingobium aromaticivorans (strain ATCC 700278 / DSM 12444 / CCUG 56034 / CIP 105152 / NBRC 16084 / F199) protein is Small ribosomal subunit protein uS14.